The chain runs to 320 residues: Cytochrome f (320 aa).

The first 35 residues, Met1 to Ala35, serve as a signal peptide directing secretion. The heme site is built by Tyr36, Cys56, Cys59, and His60. Residues Val286–Leu305 traverse the membrane as a helical segment.

Belongs to the cytochrome f family. In terms of assembly, the 4 large subunits of the cytochrome b6-f complex are cytochrome b6, subunit IV (17 kDa polypeptide, petD), cytochrome f and the Rieske protein, while the 4 small subunits are PetG, PetL, PetM and PetN. The complex functions as a dimer. Heme is required as a cofactor.

The protein localises to the plastid. It localises to the chloroplast thylakoid membrane. Functionally, component of the cytochrome b6-f complex, which mediates electron transfer between photosystem II (PSII) and photosystem I (PSI), cyclic electron flow around PSI, and state transitions. The protein is Cytochrome f (petA) of Zea mays (Maize).